The sequence spans 451 residues: Probable plasmid replicative DNA helicase (451 aa).

Positions 194–451 (NDSFYDGLPT…SKFSAIKKVW (258 aa)) constitute an SF4 helicase domain. 225–232 (ARPSIGKT) contributes to the ATP binding site.

This sequence belongs to the helicase family. DnaB subfamily. As to quaternary structure, homohexamer.

It carries out the reaction Couples ATP hydrolysis with the unwinding of duplex DNA at the replication fork by translocating in the 5'-3' direction. This creates two antiparallel DNA single strands (ssDNA). The leading ssDNA polymer is the template for DNA polymerase III holoenzyme which synthesizes a continuous strand.. The enzyme catalyses ATP + H2O = ADP + phosphate + H(+). In terms of biological role, a replicative DNA helicase, it participates in initiation and elongation during DNA replication. Travels ahead of the DNA replisome, separating dsDNA into templates for DNA synthesis. A processive ATP-dependent 5'-3' DNA helicase it has DNA-dependent ATPase activity. In Chlamydia muridarum (strain MoPn / Nigg), this protein is Probable plasmid replicative DNA helicase.